The sequence spans 70 residues: MEMDITQYLSTQGPFAVLFCWLLFYVMKTSKERESKLYNQIDSQNEVLGKFSEKYDVVIEKLDKIEQNFK.

Functionally, may be involved in the secretion of the autolysin BlyA. The sequence is that of SPbeta prophage-derived protein BhlA (bhlA) from Bacillus subtilis (strain 168).